Here is a 1011-residue protein sequence, read N- to C-terminus: Protein translocase subunit SecA (1011 aa).

Residues Q87, 105–109 (GEGKT), and D500 contribute to the ATP site. Residues 969-1011 (SLPLGANPAPARPQPAVMQEQECPCGSGKPFNKCHGGEDEATA) are disordered. 4 residues coordinate Zn(2+): C991, C993, C1002, and H1003.

This sequence belongs to the SecA family. Monomer and homodimer. Part of the essential Sec protein translocation apparatus which comprises SecA, SecYEG and auxiliary proteins SecDF-YajC and YidC. Requires Zn(2+) as cofactor.

It localises to the cell inner membrane. It is found in the cytoplasm. The enzyme catalyses ATP + H2O + cellular proteinSide 1 = ADP + phosphate + cellular proteinSide 2.. Part of the Sec protein translocase complex. Interacts with the SecYEG preprotein conducting channel. Has a central role in coupling the hydrolysis of ATP to the transfer of proteins into and across the cell membrane, serving as an ATP-driven molecular motor driving the stepwise translocation of polypeptide chains across the membrane. The polypeptide is Protein translocase subunit SecA (Sorangium cellulosum (strain So ce56) (Polyangium cellulosum (strain So ce56))).